The sequence spans 270 residues: Phospholysine phosphohistidine inorganic pyrophosphate phosphatase (270 aa).

The Mg(2+) site is built by D17 and S19. Substrate is bound by residues 17-19, 54-55, and K189; these read DIS and TN. D214 is a binding site for Mg(2+).

The protein belongs to the HAD-like hydrolase superfamily. In terms of assembly, homodimer. Mg(2+) serves as cofactor. As to expression, expressed in brain, and at lower levels in liver and kidney. Detected in thyroid (at protein level). Expressed in liver, kidney and moderately in brain.

The protein localises to the cytoplasm. The protein resides in the nucleus. The enzyme catalyses diphosphate + H2O = 2 phosphate + H(+). Functionally, phosphatase that hydrolyzes imidodiphosphate, 3-phosphohistidine and 6-phospholysine. Has broad substrate specificity and can also hydrolyze inorganic diphosphate, but with lower efficiency. This chain is Phospholysine phosphohistidine inorganic pyrophosphate phosphatase (LHPP), found in Homo sapiens (Human).